A 322-amino-acid polypeptide reads, in one-letter code: Ubiquitin-conjugating enzyme E2 U (322 aa).

A UBC core domain is found at 4 to 153 (RAYLLLQRDF…LKLFNRPLQM (150 aa)). The Glycyl thioester intermediate role is filled by C89.

Belongs to the ubiquitin-conjugating enzyme family. Autoubiquitinated in vitro in the presence of UBR5.

It catalyses the reaction S-ubiquitinyl-[E1 ubiquitin-activating enzyme]-L-cysteine + [E2 ubiquitin-conjugating enzyme]-L-cysteine = [E1 ubiquitin-activating enzyme]-L-cysteine + S-ubiquitinyl-[E2 ubiquitin-conjugating enzyme]-L-cysteine.. Its pathway is protein modification; protein ubiquitination. Functionally, catalyzes the covalent attachment of ubiquitin to other proteins. The polypeptide is Ubiquitin-conjugating enzyme E2 U (UBE2U) (Macaca fascicularis (Crab-eating macaque)).